Reading from the N-terminus, the 467-residue chain is Light-independent protochlorophyllide reductase subunit N (467 aa).

The [4Fe-4S] cluster site is built by Cys-23, Cys-48, and Cys-108.

This sequence belongs to the BchN/ChlN family. Protochlorophyllide reductase is composed of three subunits; ChlL, ChlN and ChlB. Forms a heterotetramer of two ChlB and two ChlN subunits. [4Fe-4S] cluster serves as cofactor.

It catalyses the reaction chlorophyllide a + oxidized 2[4Fe-4S]-[ferredoxin] + 2 ADP + 2 phosphate = protochlorophyllide a + reduced 2[4Fe-4S]-[ferredoxin] + 2 ATP + 2 H2O. It participates in porphyrin-containing compound metabolism; chlorophyll biosynthesis (light-independent). Component of the dark-operative protochlorophyllide reductase (DPOR) that uses Mg-ATP and reduced ferredoxin to reduce ring D of protochlorophyllide (Pchlide) to form chlorophyllide a (Chlide). This reaction is light-independent. The NB-protein (ChlN-ChlB) is the catalytic component of the complex. In Nostoc sp. (strain PCC 7120 / SAG 25.82 / UTEX 2576), this protein is Light-independent protochlorophyllide reductase subunit N.